Reading from the N-terminus, the 685-residue chain is T-box transcription factor TBX2 (685 aa).

The T-box DNA-binding region spans Leu104–Asp277. Disordered regions lie at residues Pro270–Leu433 and Asn606–Glu660. Basic and acidic residues-rich tracts occupy residues Met296–Ala308, Ser340–Thr361, Arg378–Gly403, and Ser410–Pro428. Positions Asn606–Asn617 are enriched in polar residues. Over residues Pro618–Pro633 the composition is skewed to low complexity. The stretch at Ala652–Glu676 forms a coiled coil.

Binds DNA as a monomer.

Its subcellular location is the nucleus. Transcription factor which acts as a transcriptional repressor. May also function as a transcriptional activator. Binds to the palindromic T site 5'-TTCACACCTAGGTGTGAA-3' DNA sequence, or a half-site, which are present in the regulatory region of several genes. This is T-box transcription factor TBX2 (tbx2) from Xenopus tropicalis (Western clawed frog).